A 937-amino-acid polypeptide reads, in one-letter code: Glycine dehydrogenase (decarboxylating) (937 aa).

An N6-(pyridoxal phosphate)lysine modification is found at lysine 686.

Belongs to the GcvP family. The glycine cleavage system is composed of four proteins: P, T, L and H. The cofactor is pyridoxal 5'-phosphate.

The catalysed reaction is N(6)-[(R)-lipoyl]-L-lysyl-[glycine-cleavage complex H protein] + glycine + H(+) = N(6)-[(R)-S(8)-aminomethyldihydrolipoyl]-L-lysyl-[glycine-cleavage complex H protein] + CO2. In terms of biological role, the glycine cleavage system catalyzes the degradation of glycine. The P protein binds the alpha-amino group of glycine through its pyridoxal phosphate cofactor; CO(2) is released and the remaining methylamine moiety is then transferred to the lipoamide cofactor of the H protein. The polypeptide is Glycine dehydrogenase (decarboxylating) (Mesorhizobium japonicum (strain LMG 29417 / CECT 9101 / MAFF 303099) (Mesorhizobium loti (strain MAFF 303099))).